We begin with the raw amino-acid sequence, 255 residues long: Formate hydrogenlyase subunit 7 (255 aa).

The [4Fe-4S] cluster site is built by Cys45, Cys51, Cys115, and Cys145.

This sequence belongs to the complex I 20 kDa subunit family. FHL comprises of a formate dehydrogenase, unidentified electron carriers and a hydrogenase (isoenzyme 3). In this non-energy conserving pathway molecular hydrogen and carbodioxide from formate are released. [4Fe-4S] cluster is required as a cofactor.

The chain is Formate hydrogenlyase subunit 7 (hycG) from Escherichia coli (strain K12).